The chain runs to 317 residues: Taste receptor type 2 member 14 (317 aa).

Residues 1–7 (MGGVIKS) lie on the Extracellular side of the membrane. Residues 8 to 28 (IFTFVLIVEFIIGNLGNSFIA) traverse the membrane as a helical segment. Over 29–55 (LVNCIDWVKGRKISSVDRILTALAISK) the chain is Cytoplasmic. A helical transmembrane segment spans residues 56-76 (ISLVWLIFGSWCVSVFFPALF). At 77-87 (ATEKMFRMLTN) the chain is on the extracellular side. Cholesterol contacts are provided by T86 and W89. A helical transmembrane segment spans residues 88–108 (IWTVINHFSVWLATGLGTFYF). Over 109-129 (LKIANFSNSIFLYLKWRVKKV) the chain is Cytoplasmic. A helical transmembrane segment spans residues 130 to 150 (VLVLLLVTSVFLFLNIALINI). Residues 151-184 (HINASINGYRRNKTCSSDSSNFTRFSSLIVLTST) lie on the Extracellular side of the membrane. N-linked (GlcNAc...) asparagine glycosylation is found at N153, N162, and N171. A cholesterol-binding site is contributed by V180. A helical membrane pass occupies residues 185–205 (VFIFIPFTLSLAMFLLLIFSX). Topologically, residues 206–232 (WKHRKKMQHTVKRSGDASTKAHRGVKS) are cytoplasmic. The helical transmembrane segment at 233–253 (VXTFFLLYAIFCLSFFISVWT) threads the bilayer. The Extracellular portion of the chain corresponds to 254–261 (SERLEENL). A helical membrane pass occupies residues 262–282 (IILSQVMGMAYPSCHSCVLIL). Positions 265 and 268 each coordinate cholesterol. The Cytoplasmic segment spans residues 283-317 (GNKKLRQASLSVLLWLRYMFKDGEPSGHKEFRESS).

It belongs to the G-protein coupled receptor T2R family. In terms of assembly, core component of the TAS2R14-GNAI1 complex, consisting of TAS2R14, GNAI1, GNB1 and GNG2; within the complex interacts with GNAI1. Core component of the TAS2R14-GNAT3 complex, consisting of TAS2R14, GNAT3, GNB1 and GNG2; within the complex interacts with GNAT3. Core component of the TAS2R14-GNAS2 complex, consisting of TAS2R14, GNAS2, GNB1 and GNG2; within the complex interacts with GNAS2.

The protein resides in the membrane. It catalyses the reaction Ca(2+)(in) = Ca(2+)(out). The catalysed reaction is 3',5'-cyclic AMP(in) = 3',5'-cyclic AMP(out). Basal activity is enhanced by binding to bitter tastants, such as flufenamic acid and aristolochic acid. Regulated by cholesterol in a concentration-dependent manner. Functionally, gustducin-linked G-protein coupled receptor that plays a role in the perception of bitterness. The activity of this receptor stimulates GNAT3, activating the gustducin G-protein pathway. Likely plays a role in sensing the chemical composition of the gastrointestinal content and other extra-oral tissues via the inhibitory G-protein pathways. The protein is Taste receptor type 2 member 14 (TAS2R14) of Pan troglodytes (Chimpanzee).